The following is a 561-amino-acid chain: Putative transport protein YbjL (561 aa).

The next 5 helical transmembrane spans lie at 8–28 (LLNGNYILLLFVVLALGLCLG), 32–52 (LGSVQLGNSIGVLVVSLLLGQ), 66–86 (FMLFIFCVGVEAGPNFFSIFF), 94–114 (MLALVMVGSALLIALGLGKLF), and 158–178 (NLSLGYALTYLIGLVSLIVGA). RCK C-terminal domains lie at 200-288 (RGLD…SFRN) and 292-373 (VFDR…RIGF). 5 helical membrane-spanning segments follow: residues 383–403 (LLAFCAFFIIGLMIGMITFQF), 406–426 (FSFGIGNAAGLLFAGIMLGFL), 447–467 (FGLMVFMAGVGLSAGSGISNG), 475–495 (MLIAGLVVSLVPVVICFLFGA), and 540–560 (AIANVLLTLAGTLIVIIWPGL).

It belongs to the AAE transporter (TC 2.A.81) family. YbjL subfamily.

Its subcellular location is the cell membrane. In Salmonella dublin (strain CT_02021853), this protein is Putative transport protein YbjL.